We begin with the raw amino-acid sequence, 404 residues long: DNA gyrase subunit B (404 aa).

Residues 321–404 enclose the Toprim domain; that stretch reads SEIYIVEGDS…VIIMTDADVD (84 aa). Mg(2+) is bound by residues E327, D400, and D402.

The protein belongs to the type II topoisomerase GyrB family. In terms of assembly, heterotetramer, composed of two GyrA and two GyrB chains. In the heterotetramer, GyrA contains the active site tyrosine that forms a transient covalent intermediate with DNA, while GyrB binds cofactors and catalyzes ATP hydrolysis. Requires Mg(2+) as cofactor. It depends on Mn(2+) as a cofactor. Ca(2+) is required as a cofactor.

Its subcellular location is the cytoplasm. It carries out the reaction ATP-dependent breakage, passage and rejoining of double-stranded DNA.. Functionally, a type II topoisomerase that negatively supercoils closed circular double-stranded (ds) DNA in an ATP-dependent manner to modulate DNA topology and maintain chromosomes in an underwound state. Negative supercoiling favors strand separation, and DNA replication, transcription, recombination and repair, all of which involve strand separation. Also able to catalyze the interconversion of other topological isomers of dsDNA rings, including catenanes and knotted rings. Type II topoisomerases break and join 2 DNA strands simultaneously in an ATP-dependent manner. This is DNA gyrase subunit B (gyrB) from Bacillus mycoides.